The chain runs to 443 residues: Ribosomal protein uS12 methylthiotransferase RimO (443 aa).

Positions 6–116 (PRVGMISLGC…VVNAVHDVVP (111 aa)) constitute an MTTase N-terminal domain. [4Fe-4S] cluster contacts are provided by Cys15, Cys51, Cys80, Cys149, Cys153, and Cys156. Residues 135–373 (LTPRHYAYLK…MAHQQAISAA (239 aa)) form the Radical SAM core domain. One can recognise a TRAM domain in the interval 376-443 (QMKIGKEIEV…DEYDLWAEML (68 aa)).

This sequence belongs to the methylthiotransferase family. RimO subfamily. Requires [4Fe-4S] cluster as cofactor.

The protein localises to the cytoplasm. The catalysed reaction is L-aspartate(89)-[ribosomal protein uS12]-hydrogen + (sulfur carrier)-SH + AH2 + 2 S-adenosyl-L-methionine = 3-methylsulfanyl-L-aspartate(89)-[ribosomal protein uS12]-hydrogen + (sulfur carrier)-H + 5'-deoxyadenosine + L-methionine + A + S-adenosyl-L-homocysteine + 2 H(+). Its function is as follows. Catalyzes the methylthiolation of an aspartic acid residue of ribosomal protein uS12. The polypeptide is Ribosomal protein uS12 methylthiotransferase RimO (Pseudomonas syringae pv. tomato (strain ATCC BAA-871 / DC3000)).